The chain runs to 412 residues: D-amino acid dehydrogenase 3 (412 aa).

4-18 (IVVIGAGIAGVSTAY) contributes to the FAD binding site.

Belongs to the DadA oxidoreductase family. It depends on FAD as a cofactor.

It catalyses the reaction a D-alpha-amino acid + A + H2O = a 2-oxocarboxylate + AH2 + NH4(+). Functionally, oxidative deamination of D-amino acids. The protein is D-amino acid dehydrogenase 3 (dadA3) of Mesorhizobium japonicum (strain LMG 29417 / CECT 9101 / MAFF 303099) (Mesorhizobium loti (strain MAFF 303099)).